The chain runs to 245 residues: Ninjurin-A (245 aa).

At M1 to P170 the chain is on the extracellular side. Residues N19 and N28 are each glycosylated (N-linked (GlcNAc...) asparagine). The interval H32–G101 is disordered. The segment covering N92 to G101 has biased composition (low complexity). Residues K135–A146 form a helix alpha1 region. Residues S149–H165 form a helix alpha2 region. A helical transmembrane segment spans residues S171–L191. The Cytoplasmic portion of the chain corresponds to N192–N211. The chain crosses the membrane as a helical span at residues Y212–V232. The Extracellular segment spans residues D233–T245.

The protein belongs to the ninjurin family. In terms of assembly, homooligomer. Post-translationally, cleaved by Mmp1 protease to generate the Secreted ninjurin-A form.

It is found in the cell membrane. The protein resides in the secreted. In terms of biological role, effector of non-apoptotic necrotic cell death that mediates plasma membrane rupture (cytolysis): oligomerizes in response to death stimuli and promotes plasma membrane rupture by introducing hydrophilic faces of 2 alpha helices into the hydrophobic membrane, leading to release intracellular molecules that propagate the inflammatory response. Also acts as a homophilic transmembrane adhesion molecule that promotes cell adhesion by mediating homophilic interactions via its extracellular region. Secreted form generated by cleavage, which acts as a negative regulator of cell adhesion. Promotes the loss of cell adhesion in a cell non-autonomous manner. The sequence is that of Ninjurin-A from Drosophila melanogaster (Fruit fly).